The chain runs to 516 residues: Multicopper oxidase CueO (516 aa).

Positions 1–28 (MQRRDFLKYSVALGVASALPLWSRAVFA) form a signal peptide, tat-type signal. Plastocyanin-like domains lie at 55-165 (GQST…IEDD) and 227-292 (PRGW…DNKP). Cu cation is bound by residues histidine 101, histidine 103, histidine 141, and histidine 143. The tract at residues 355 to 400 (MDPMLDMMGMQMLMEKYGDQAMAGMDHSQMMGHMGHGNMNHMNHGG) is methionine-rich region. The Plastocyanin-like 3 domain occupies 402–516 (FDFHHANKIN…DTGMMLGFTV (115 aa)). Positions 443, 446, 448, 499, 500, 501, and 505 each coordinate Cu cation.

It belongs to the multicopper oxidase family. As to quaternary structure, monomer. Cu cation serves as cofactor. In terms of processing, exported by the Tat system. The position of the signal peptide cleavage has been experimentally proven.

The protein resides in the periplasm. The catalysed reaction is 4 Cu(+) + O2 + 4 H(+) = 4 Cu(2+) + 2 H2O. Its activity is regulated as follows. Ferroxidase and phenoloxidase activities are enhanced considerably in the presence of excess copper ions. A labile regulatory copper ion near the T1 copper site is important for the copper associated activation of enzyme activity. Ag(+) acts as a potent inhibitor of oxidase activity by binding at Cu(+) binding sites, blocking Cu(+) substrate binding and oxidation. pPD oxidase activity is strongly inhibited by sodium azide, an inhibitor of the electron transfer. Its function is as follows. Multicopper oxidase involved in copper homeostasis and copper tolerance under aerobic conditions. Is responsible for the oxidation of Cu(+) to the less harmful Cu(2+) in the periplasm, thereby preventing Cu(+) from entering the cytoplasm. Probably primarily functions as a cuprous oxidase in vivo. In terms of biological role, in vitro, in the presence of excess copper ions, exhibits ferroxidase and phenoloxidase activities. Fe(2+) is an excellent substrate in the presence of excess Cu(2+), but is inactive in the absence of Cu(2+). Oxidizes the phenolate iron siderophores enterobactin, 2,3-dihydroxybenzoate (2,3-DHB) and 3-hydroxyanthranilate (3-HAA). Oxidation and thus inactivation of enterobactin could protect cells from the interaction of enterobactin with copper and play a central role as an interface between copper detoxification and iron homeostasis. Also oxidizes a variety of phenolic model substrates, including 2,2'-azinobis(3-ethylbenzthiazolinesulfonic acid) (ABTS), p-phenylenediamine (pPD), 2,6-dimethoxyphenol (2,6-DMP) and 3,4-dihydroxybenzoic acid (3,4-DHB). The polypeptide is Multicopper oxidase CueO (Escherichia coli (strain K12)).